The following is a 209-amino-acid chain: Protein-L-isoaspartate O-methyltransferase (209 aa).

S55 is an active-site residue.

This sequence belongs to the methyltransferase superfamily. L-isoaspartyl/D-aspartyl protein methyltransferase family.

It is found in the cytoplasm. The catalysed reaction is [protein]-L-isoaspartate + S-adenosyl-L-methionine = [protein]-L-isoaspartate alpha-methyl ester + S-adenosyl-L-homocysteine. Catalyzes the methyl esterification of L-isoaspartyl residues in peptides and proteins that result from spontaneous decomposition of normal L-aspartyl and L-asparaginyl residues. It plays a role in the repair and/or degradation of damaged proteins. The chain is Protein-L-isoaspartate O-methyltransferase from Anaeromyxobacter dehalogenans (strain 2CP-1 / ATCC BAA-258).